The following is an 81-amino-acid chain: Type III secretion regulatory protein ExsE (81 aa).

The segment at 55–81 is disordered; it reads DPRSEQALQRLADGDGTPLEARTVRRR.

In terms of assembly, interacts with ExsC.

Its subcellular location is the cytoplasm. It localises to the secreted. In terms of biological role, acts as a negative regulator of the type III secretion regulon (T3SS) expression. In the absence of inducing signals such as low Ca(2+) or host cell contact, the T3SS/injectisome is expressed at a low basal level and exists in a quiescent state due to ExsA sequestration by ExsD. ExsE binding to ExsC disrupts the complex between ExsC and ExsD, thereby allowing free ExsD to bind ExsA. Upon inducing signal, ExsE is secreted allowing ExsC to bind ExsD. In turn, ExsD cannot bind ExsA and prevent ExsA-mediated transcriptional activation of the type III secretion system. The polypeptide is Type III secretion regulatory protein ExsE (exsE) (Pseudomonas aeruginosa (strain ATCC 15692 / DSM 22644 / CIP 104116 / JCM 14847 / LMG 12228 / 1C / PRS 101 / PAO1)).